A 229-amino-acid polypeptide reads, in one-letter code: Cytochrome c oxidase subunit 2 (229 aa).

Topologically, residues 1 to 26 (MANWTQLGLQDASSPLMEELIYFHDY) are mitochondrial intermembrane. The helical transmembrane segment at 27 to 48 (TLIILTLITILVFYGLASLIVS) threads the bilayer. Residues 49–62 (SNTNRFFLEGQSLE) lie on the Mitochondrial matrix side of the membrane. A helical transmembrane segment spans residues 63–82 (TIWTVIPAVILIFIALPSLQ). The Mitochondrial intermembrane segment spans residues 83–229 (LLYLIDEVNN…ENWVSNFLNE (147 aa)). Residues histidine 161, cysteine 196, glutamate 198, cysteine 200, histidine 204, and methionine 207 each coordinate Cu cation. Mg(2+) is bound at residue glutamate 198.

It belongs to the cytochrome c oxidase subunit 2 family. As to quaternary structure, component of the cytochrome c oxidase (complex IV, CIV), a multisubunit enzyme composed of a catalytic core of 3 subunits and several supernumerary subunits. The complex exists as a monomer or a dimer and forms supercomplexes (SCs) in the inner mitochondrial membrane with ubiquinol-cytochrome c oxidoreductase (cytochrome b-c1 complex, complex III, CIII). It depends on Cu cation as a cofactor.

It localises to the mitochondrion inner membrane. The enzyme catalyses 4 Fe(II)-[cytochrome c] + O2 + 8 H(+)(in) = 4 Fe(III)-[cytochrome c] + 2 H2O + 4 H(+)(out). Component of the cytochrome c oxidase, the last enzyme in the mitochondrial electron transport chain which drives oxidative phosphorylation. The respiratory chain contains 3 multisubunit complexes succinate dehydrogenase (complex II, CII), ubiquinol-cytochrome c oxidoreductase (cytochrome b-c1 complex, complex III, CIII) and cytochrome c oxidase (complex IV, CIV), that cooperate to transfer electrons derived from NADH and succinate to molecular oxygen, creating an electrochemical gradient over the inner membrane that drives transmembrane transport and the ATP synthase. Cytochrome c oxidase is the component of the respiratory chain that catalyzes the reduction of oxygen to water. Electrons originating from reduced cytochrome c in the intermembrane space (IMS) are transferred via the dinuclear copper A center (CU(A)) of subunit 2 and heme A of subunit 1 to the active site in subunit 1, a binuclear center (BNC) formed by heme A3 and copper B (CU(B)). The BNC reduces molecular oxygen to 2 water molecules using 4 electrons from cytochrome c in the IMS and 4 protons from the mitochondrial matrix. The chain is Cytochrome c oxidase subunit 2 (COII) from Pisaster ochraceus (Ochre sea star).